A 912-amino-acid polypeptide reads, in one-letter code: Collagen alpha-2(I) chain (912 aa).

Residues 1–41 show a composition bias toward low complexity; that stretch reads GPMGIMGPRGPPGASGAPGPQGFQGPAGEPGEPGQTGPAGA. Disordered regions lie at residues 1–206, 222–739, and 763–912; these read GPMG…GITG, IPGP…GIIG, and GPPG…RGSQ. The segment covering 43 to 57 has biased composition (basic and acidic residues); that stretch reads AGEDGHPGKPGRPGE. 6 stretches are compositionally biased toward low complexity: residues 124–153, 178–192, 229–244, 295–327, 360–382, and 406–424; these read VGAP…SAGP, AGPR…ISGP, PGPA…RGIV, PGIR…VRGP, PVGI…RGEP, and AGIA…NGAQ. Gly residues predominate over residues 431–440; that stretch reads GVQGGKGEQG. 2 stretches are compositionally biased toward low complexity: residues 474-501 and 517-532; these read IPGP…SRGP and IGAP…SGIP. The span at 539–548 shows a compositional bias: gly residues; sequence GIPGGKGEIG. Low complexity-rich tracts occupy residues 549 to 612 and 622 to 637; these read NPGR…QPGA and NGPV…AGPS. Positions 647-656 are enriched in gly residues; sequence GSRGDGGPPG. Composition is skewed to low complexity over residues 658–667, 728–739, 763–785, 805–815, and 830–850; these read TGFPGAAGRT, PQGIIGAPGIIG, GPPG…APGE, NAGPVGAVGAP, and PGPV…PSGP.

It belongs to the fibrillar collagen family. In terms of assembly, trimers of one alpha 2(I) and two alpha 1(I) chains. Interacts (via C-terminus) with TMEM131 (via PapD-L domain); the interaction is direct and is involved in assembly and TRAPPIII ER-to-Golgi transport complex-dependent secretion of collagen. Prolines at the third position of the tripeptide repeating unit (G-X-Y) are hydroxylated in some or all of the chains. As to expression, forms the fibrils of tendon, ligaments and bones. In bones, the fibrils are mineralized with calcium hydroxyapatite.

The protein resides in the secreted. It localises to the extracellular space. Its subcellular location is the extracellular matrix. In terms of biological role, type I collagen is a member of group I collagen (fibrillar forming collagen). This Equus sp protein is Collagen alpha-2(I) chain.